Here is a 1755-residue protein sequence, read N- to C-terminus: Transposon Ty1-LR2 Gag-Pol polyprotein (1755 aa).

Composition is skewed to polar residues over residues 1 to 23, 48 to 60, and 127 to 152; these read MESQ…SVTS, TKAN…TPAS, and QSQF…GNTF. Disordered regions lie at residues 1 to 93, 126 to 174, and 352 to 421; these read MESQ…MMTQ, PQSQ…PPPM, and GSRN…SKST. The segment covering 153-165 has biased composition (low complexity); sequence TDSSSADSDMTST. Residues 299–401 form an RNA-binding region; the sequence is NNGIHINNKV…NSKSKTARAH (103 aa). Over residues 402 to 418 the composition is skewed to low complexity; it reads NVSTSNNSPSTDNDSIS. Serine 416 carries the post-translational modification Phosphoserine. The active-site For protease activity; shared with dimeric partner is the aspartate 461. The interval 583–640 is integrase-type zinc finger-like; the sequence is NVHTSESTRKYPYPFIHRMLAHANAPTIRYSLKNNTITYFNESDVDWSSAIDYQCPDC. The Integrase catalytic domain occupies 660 to 835; the sequence is NSYEPFQYLH…AGLDISTLLP (176 aa). Mg(2+)-binding residues include aspartate 671 and aspartate 736. Disordered regions lie at residues 956–1087, 1092–1111, and 1130–1187; these read SKAV…ETEK, RSPS…NIVP, and DLPL…DNET. Over residues 960 to 969 the composition is skewed to low complexity; it reads SPTDSTPPST. A compositionally biased stretch (polar residues) spans 1005-1015; it reads STPQISNIEST. The span at 1038-1053 shows a compositional bias: basic and acidic residues; the sequence is ESSHASKSKDFRHSDS. Composition is skewed to polar residues over residues 1054–1082 and 1101–1111; these read YSEN…QISD and PENNSSHNIVP. The Bipartite nuclear localization signal signature appears at 1178 to 1212; sequence KKRSLEDNETEIKVSRDTWNTKNMRSLEPPRSKKR. Residues 1338–1476 form the Reverse transcriptase Ty1/copia-type domain; that stretch reads NNYYITQLDI…DILGLEIKYQ (139 aa). Residues aspartate 1346, aspartate 1427, aspartate 1428, aspartate 1610, glutamate 1652, and aspartate 1685 each contribute to the Mg(2+) site. The region spanning 1610–1752 is the RNase H Ty1/copia-type domain; it reads DASYGNQPYY…IKTFKLLTNK (143 aa).

As to quaternary structure, the capsid protein forms a homotrimer, from which the VLPs are assembled. The protease is a homodimer, whose active site consists of two apposed aspartic acid residues. In terms of processing, initially, virus-like particles (VLPs) are composed of the structural unprocessed proteins Gag and Gag-Pol, and also contain the host initiator methionine tRNA (tRNA(i)-Met) which serves as a primer for minus-strand DNA synthesis, and a dimer of genomic Ty RNA. Processing of the polyproteins occurs within the particle and proceeds by an ordered pathway, called maturation. First, the protease (PR) is released by autocatalytic cleavage of the Gag-Pol polyprotein yielding capsid protein p45 and a Pol-p154 precursor protein. This cleavage is a prerequisite for subsequent processing of Pol-p154 at the remaining sites to release the mature structural and catalytic proteins. Maturation takes place prior to the RT reaction and is required to produce transposition-competent VLPs.

Its subcellular location is the cytoplasm. The protein resides in the nucleus. The catalysed reaction is DNA(n) + a 2'-deoxyribonucleoside 5'-triphosphate = DNA(n+1) + diphosphate. The enzyme catalyses Endonucleolytic cleavage to 5'-phosphomonoester.. In terms of biological role, capsid protein (CA) is the structural component of the virus-like particle (VLP), forming the shell that encapsulates the retrotransposons dimeric RNA genome. The particles are assembled from trimer-clustered units and there are holes in the capsid shells that allow for the diffusion of macromolecules. CA also has nucleocapsid-like chaperone activity, promoting primer tRNA(i)-Met annealing to the multipartite primer-binding site (PBS), dimerization of Ty1 RNA and initiation of reverse transcription. Functionally, the aspartyl protease (PR) mediates the proteolytic cleavages of the Gag and Gag-Pol polyproteins after assembly of the VLP. Its function is as follows. Reverse transcriptase/ribonuclease H (RT) is a multifunctional enzyme that catalyzes the conversion of the retro-elements RNA genome into dsDNA within the VLP. The enzyme displays a DNA polymerase activity that can copy either DNA or RNA templates, and a ribonuclease H (RNase H) activity that cleaves the RNA strand of RNA-DNA heteroduplexes during plus-strand synthesis and hydrolyzes RNA primers. The conversion leads to a linear dsDNA copy of the retrotransposon that includes long terminal repeats (LTRs) at both ends. Integrase (IN) targets the VLP to the nucleus, where a subparticle preintegration complex (PIC) containing at least integrase and the newly synthesized dsDNA copy of the retrotransposon must transit the nuclear membrane. Once in the nucleus, integrase performs the integration of the dsDNA into the host genome. The polypeptide is Transposon Ty1-LR2 Gag-Pol polyprotein (TY1B-LR2) (Saccharomyces cerevisiae (strain ATCC 204508 / S288c) (Baker's yeast)).